The chain runs to 134 residues: Phosphomevalonate dehydratase small subunit (134 aa).

Residue Ser62 is the Proton acceptor of the active site.

This sequence belongs to the AcnX type II small subunit family. Heterodimer composed of a large subunit (PMDh-L) and a small subunit (PMDh-S).

The catalysed reaction is (R)-5-phosphomevalonate = (2E)-3-methyl-5-phosphooxypent-2-enoate + H2O. It participates in isoprenoid biosynthesis; isopentenyl diphosphate biosynthesis via mevalonate pathway. Its function is as follows. Component of a hydro-lyase that catalyzes the dehydration of mevalonate 5-phosphate (MVA5P) to form trans-anhydromevalonate 5-phosphate (tAHMP). Involved in the archaeal mevalonate (MVA) pathway, which provides fundamental precursors for isoprenoid biosynthesis, such as isopentenyl diphosphate (IPP) and dimethylallyl diphosphate (DMAPP). In Pyrococcus furiosus (strain ATCC 43587 / DSM 3638 / JCM 8422 / Vc1), this protein is Phosphomevalonate dehydratase small subunit.